The chain runs to 419 residues: Light-dependent chlorophyll f synthase (419 aa).

Helical transmembrane passes span 73–90, 162–177, 186–200, 241–262, and 323–337; these read YIGWFGMLAIPTLATAAI, HFIIGIISYQDREWEL, WISLAFTAPVAASVS, LHQMGVIGVLGGALLCAVHGSL, and CLAALPVAGIWSAAI. His-162 is an a chlorophyll binding site. An a chlorophyll-binding site is contributed by His-242.

This sequence belongs to the reaction center PufL/M/PsbA/D family. As to quaternary structure, homodimer.

It localises to the cellular thylakoid membrane. Functionally, synthesizes chlorophyll f or chlorophyllide f (Chl f, 2-formyl chlorophyll a), probably by oxidation of chlorophyll a or chlorophyllide a and reduction of plastoquinone. The reaction is probably light-dependent. Chl f absorbs far red light (FRL, 707 nm in 100% methanol), and is synthesized when cells are grown in FRL, where it provides the advantage of extending the spectral range of harvested light in terrestrial cyanobacteria. Chl f synthesis is probably light-dependent. The protein is Light-dependent chlorophyll f synthase of Synechococcus sp. (strain ATCC 29403 / PCC 7335).